We begin with the raw amino-acid sequence, 476 residues long: MASRRLALNLAQGVKARAGGVINPFRRGLATPHSGTGIKTQTTTLKNGLTVASQYSPYAQTSTVGMWIDAGSRAETDETNGTAHFLEHLAFKGTTKRTQQQLELEIENMGAHLNAYTSRENTVYFAKALNEDVPKCVDILQDILQNSKLEESAIERERDVILRESEEVEKQLEEVVFDHLHATAYQHQPLGRTILGPRENIRDITRTELVNYIKNNYTADRMVLVGAGGVPHEQLVEMADKYFSKLPATAPVSSASILSKKKPDFIGSDIRIRDDTIPTANIAIAVEGVSWSDDDYFTGLVTQAIVGNYDKALGNAPHQGSKLSGFVHKHDLATSFMSFSTSYSDTGLWGIYLVTDKLDRVDDLVHFSLREWTRLCSNVSEAEVERAKAQLKASILLSLDGTTAVAEDIGRQIVTTGRRMSPAEIERIIDAVSAKDVMDFANKKIWDQDIAISAVGSIEGLFDYARIRGDMSRNAF.

The transit peptide at Met-1–Gly-28 directs the protein to the mitochondrion. Position 84 (His-84) interacts with Zn(2+). The active-site Proton acceptor is the Glu-87. Residues His-88 and Glu-164 each contribute to the Zn(2+) site.

This sequence belongs to the peptidase M16 family. As to quaternary structure, heterodimer of mpp (alpha) and pep (beta) subunits, forming the mitochondrial processing protease (MPP) in which mpp is involved in substrate recognition and binding and pep is the catalytic subunit. Component of the ubiquinol-cytochrome c oxidoreductase (cytochrome b-c1 complex, complex III, CIII), a multisubunit enzyme composed of 10 subunits. The complex is composed of 3 respiratory subunits cytochrome b (cob), cytochrome c1 (cyt-1) and Rieske protein (fes-1), 2 core protein subunits pep and ucr-1, and 5 low-molecular weight protein subunits qcr6, qcr7, qcr8, qcr9 and probably NCU16844/qcr10. The complex exists as an obligatory dimer and forms supercomplexes (SCs) in the inner mitochondrial membrane with NADH-ubiquinone oxidoreductase (complex I, CI) and cytochrome c oxidase (complex IV, CIV), resulting in different assemblies (supercomplexes SCI(1)III(2), SCIII(2)IV(1) and SCIII(2)IV(2) as well as higher order I(x)III(y)IV(z) megacomplexes). Zn(2+) is required as a cofactor.

It localises to the mitochondrion matrix. Its subcellular location is the mitochondrion inner membrane. It carries out the reaction Release of N-terminal transit peptides from precursor proteins imported into the mitochondrion, typically with Arg in position P2.. With respect to regulation, binding to mpp is required for catalytic activity. Inhibited by metal chelator ethylenediaminetetraacetic acid (EDTA). Functionally, catalytic subunit of the essential mitochondrial processing protease (MPP), which cleaves the mitochondrial sequence off newly imported precursors proteins. Preferentially, cleaves after an arginine at position P2. Its function is as follows. Component of the ubiquinol-cytochrome c oxidoreductase, a multisubunit transmembrane complex that is part of the mitochondrial electron transport chain which drives oxidative phosphorylation. The respiratory chain contains 3 multisubunit complexes succinate dehydrogenase (complex II, CII), ubiquinol-cytochrome c oxidoreductase (cytochrome b-c1 complex, complex III, CIII) and cytochrome c oxidase (complex IV, CIV), that cooperate to transfer electrons derived from NADH and succinate to molecular oxygen, creating an electrochemical gradient over the inner membrane that drives transmembrane transport and the ATP synthase. The cytochrome b-c1 complex catalyzes electron transfer from ubiquinol to cytochrome c, linking this redox reaction to translocation of protons across the mitochondrial inner membrane, with protons being carried across the membrane as hydrogens on the quinol. In the process called Q cycle, 2 protons are consumed from the matrix, 4 protons are released into the intermembrane space and 2 electrons are passed to cytochrome c. The protein is Mitochondrial-processing peptidase subunit beta of Neurospora crassa (strain ATCC 24698 / 74-OR23-1A / CBS 708.71 / DSM 1257 / FGSC 987).